A 129-amino-acid polypeptide reads, in one-letter code: Small ribosomal subunit protein uS11 (129 aa).

Belongs to the universal ribosomal protein uS11 family. In terms of assembly, part of the 30S ribosomal subunit. Interacts with proteins S7 and S18. Binds to IF-3.

Its function is as follows. Located on the platform of the 30S subunit, it bridges several disparate RNA helices of the 16S rRNA. Forms part of the Shine-Dalgarno cleft in the 70S ribosome. This is Small ribosomal subunit protein uS11 from Colwellia psychrerythraea (strain 34H / ATCC BAA-681) (Vibrio psychroerythus).